A 338-amino-acid chain; its full sequence is Phenylalanine--tRNA ligase alpha subunit (338 aa).

Position 252 (glutamate 252) interacts with Mg(2+).

It belongs to the class-II aminoacyl-tRNA synthetase family. Phe-tRNA synthetase alpha subunit type 1 subfamily. In terms of assembly, tetramer of two alpha and two beta subunits. The cofactor is Mg(2+).

It is found in the cytoplasm. The catalysed reaction is tRNA(Phe) + L-phenylalanine + ATP = L-phenylalanyl-tRNA(Phe) + AMP + diphosphate + H(+). The chain is Phenylalanine--tRNA ligase alpha subunit from Ectopseudomonas mendocina (strain ymp) (Pseudomonas mendocina).